The following is a 97-amino-acid chain: Co-chaperonin GroES (97 aa).

It belongs to the GroES chaperonin family. Heptamer of 7 subunits arranged in a ring. Interacts with the chaperonin GroEL.

The protein resides in the cytoplasm. Functionally, together with the chaperonin GroEL, plays an essential role in assisting protein folding. The GroEL-GroES system forms a nano-cage that allows encapsulation of the non-native substrate proteins and provides a physical environment optimized to promote and accelerate protein folding. GroES binds to the apical surface of the GroEL ring, thereby capping the opening of the GroEL channel. The sequence is that of Co-chaperonin GroES from Buchnera aphidicola subsp. Thelaxes suberi.